The following is a 348-amino-acid chain: MKAVTVIPGIPESLRLMDVSKPNPNKGQVLLKPIRVGVCGTDKEIIEGRYGKAPEGNQYLILGHEAVAEVVEIGDGVDNAGVGDIVVPTVRRPLNCDLPVDFCPVGHYLEHGIWGLHGHAAEYSVTDAKYLVKVPKEIVDVAVLTEPLSVVEKGIDMAMRIGQARFDWKPRTALVLGAGPVGLLATMVLRLMGLSTVTTATRPPDSLKAKLVKELGGTYVDSAVGQISGEFDIVVEATGSPQVINEGLGHIAPNGVYVLLGVYPSGGSLNNLGELMTSVVLNNKVIVGSVNAGIKHFEMALEHLRRAKDEFNNWPAKLITKRANLSNYQEAYTWTHDDIKTVLEIIQS.

Cys39 contacts Zn(2+). Thr41 lines the substrate pocket. Zn(2+) contacts are provided by His64 and Glu65. Glu110 and Glu146 together coordinate substrate. Glu146 lines the Zn(2+) pocket. NADP(+) is bound by residues 178–181 (AGPV), 260–262 (LGV), and 289–291 (SVN). Asn291 is a binding site for substrate.

This sequence belongs to the zinc-containing alcohol dehydrogenase family. Glucose 1-dehydrogenase subfamily. The cofactor is Zn(2+).

It carries out the reaction D-glucose + NAD(+) = D-glucono-1,5-lactone + NADH + H(+). The catalysed reaction is D-glucose + NADP(+) = D-glucono-1,5-lactone + NADPH + H(+). In terms of biological role, catalyzes the NAD(P)(+)-dependent oxidation of D-glucose to D-gluconate via gluconolactone. Can utilize both NAD(+) and NADP(+) as electron acceptor. Is involved in the degradation of glucose through a non-phosphorylative variant of the Entner-Doudoroff pathway. This chain is Glucose 1-dehydrogenase 2, found in Vulcanisaeta moutnovskia (strain 768-28).